The sequence spans 225 residues: Lipoprotein CseA (225 aa).

A signal peptide spans 1-36 (MRGLTDGRTPRGTRRTTQAASTAVAVFVALGVSLAG). Cys-37 carries the N-palmitoyl cysteine lipid modification. Cys-37 is lipidated: S-diacylglycerol cysteine. Disordered regions lie at residues 40–77 (GGTG…APDR) and 205–225 (THND…EPDS). Residues 60–73 (SASPAPAAKASPSK) are compositionally biased toward low complexity.

The protein localises to the cell membrane. May be involved in the stabilization of the cell envelope or may interact with the sensor protein CseC to modulate its activity, in response to cell envelope stress. The chain is Lipoprotein CseA (cseA) from Streptomyces coelicolor (strain ATCC BAA-471 / A3(2) / M145).